The chain runs to 267 residues: Dihydropteroate synthase (267 aa).

A Pterin-binding domain is found at 1-251; sequence MTKTKIMGIL…NVELNAKLAK (251 aa). Asparagine 11 is a Mg(2+) binding site. (7,8-dihydropterin-6-yl)methyl diphosphate contacts are provided by residues threonine 51, aspartate 84, asparagine 103, aspartate 167, lysine 203, and 239–241; that span reads RVH.

The protein belongs to the DHPS family. Homodimer. Requires Mg(2+) as cofactor.

It carries out the reaction (7,8-dihydropterin-6-yl)methyl diphosphate + 4-aminobenzoate = 7,8-dihydropteroate + diphosphate. Its pathway is cofactor biosynthesis; tetrahydrofolate biosynthesis; 7,8-dihydrofolate from 2-amino-4-hydroxy-6-hydroxymethyl-7,8-dihydropteridine diphosphate and 4-aminobenzoate: step 1/2. Functionally, catalyzes the condensation of para-aminobenzoate (pABA) with 6-hydroxymethyl-7,8-dihydropterin diphosphate (DHPt-PP) to form 7,8-dihydropteroate (H2Pte), the immediate precursor of folate derivatives. In Staphylococcus aureus (strain MSSA476), this protein is Dihydropteroate synthase (folP).